We begin with the raw amino-acid sequence, 1020 residues long: 5'-3' exoribonuclease 3 (1020 aa).

The disordered stretch occupies residues glutamine 113–arginine 144. Residues serine 121–arginine 144 show a composition bias toward basic and acidic residues. A CCHC-type zinc finger spans residues glutamate 262–glycine 279. Disordered stretches follow at residues glutamine 411–proline 440 and arginine 452–serine 483. Residues arginine 414–aspartate 433 are compositionally biased toward basic and acidic residues. Residues alanine 487 to serine 523 adopt a coiled-coil conformation. A compositionally biased stretch (low complexity) spans asparagine 831–asparagine 844. Disordered stretches follow at residues asparagine 831–leucine 859, threonine 875–valine 897, and proline 911–tyrosine 1020. Low complexity-rich tracts occupy residues proline 911–glutamine 923 and glycine 960–histidine 972. Residues arginine 1000–tyrosine 1020 show a composition bias toward basic residues.

It belongs to the 5'-3' exonuclease family. XRN2/RAT1 subfamily. As to expression, expressed in roots, leaves, stems and flowers.

It is found in the nucleus. Its function is as follows. Possesses 5'-&gt;3' exoribonuclease activity. Acts as an endogenous post-transcriptional gene silencing (PTGS) suppressor. Degrades miRNA-derived loops, excised during miRNA maturation in the nucleus. Required for proper development. Involved in pre-rRNA processing. Involved with XRN2 in the 5'-end exonucleolytic processing of 5.8S and 25S rRNAs. Contributes with XRN2 to polyadenylation-dependent nuclear RNA surveillance. Involved in the degradation of aberrant polyadenylated pre-rRNA through 5'-end processing. The protein is 5'-3' exoribonuclease 3 of Arabidopsis thaliana (Mouse-ear cress).